Reading from the N-terminus, the 240-residue chain is T4 protein (240 aa).

Belongs to the poxviruses B9 family.

The protein is T4 protein of Sheeppox virus (strain KS-1) (SPPV).